Reading from the N-terminus, the 294-residue chain is GDP-6-deoxy-D-talose 4-dehydrogenase (294 aa).

NAD(+)-binding positions include 11–12 (FI), 38–39 (DL), 60–64 (LAALT), Thr-104, Tyr-128, Lys-132, and Phe-154. Positions 104 and 128 each coordinate substrate. Tyr-128 acts as the Proton acceptor in catalysis. The substrate site is built by Asn-155 and Arg-190.

This sequence belongs to the NAD(P)-dependent epimerase/dehydratase family.

The enzyme catalyses GDP-6-deoxy-alpha-D-talose + NAD(+) = GDP-4-dehydro-alpha-D-rhamnose + NADH + H(+). It catalyses the reaction GDP-6-deoxy-alpha-D-talose + NADP(+) = GDP-4-dehydro-alpha-D-rhamnose + NADPH + H(+). Its pathway is bacterial outer membrane biogenesis; LPS O-antigen biosynthesis. Catalyzes the conversion of GDP-4-dehydro-6-deoxy-D-mannose to GDP-6-deoxy-D-talose. This Aggregatibacter actinomycetemcomitans (Actinobacillus actinomycetemcomitans) protein is GDP-6-deoxy-D-talose 4-dehydrogenase (tld).